A 115-amino-acid polypeptide reads, in one-letter code: Ribosome-binding factor A (115 aa).

Belongs to the RbfA family. Monomer. Binds 30S ribosomal subunits, but not 50S ribosomal subunits or 70S ribosomes.

The protein resides in the cytoplasm. Its function is as follows. One of several proteins that assist in the late maturation steps of the functional core of the 30S ribosomal subunit. Associates with free 30S ribosomal subunits (but not with 30S subunits that are part of 70S ribosomes or polysomes). Required for efficient processing of 16S rRNA. May interact with the 5'-terminal helix region of 16S rRNA. The polypeptide is Ribosome-binding factor A (Staphylococcus carnosus (strain TM300)).